A 236-amino-acid chain; its full sequence is 2-C-methyl-D-erythritol 4-phosphate cytidylyltransferase (236 aa).

Belongs to the IspD/TarI cytidylyltransferase family. IspD subfamily. As to quaternary structure, homodimer.

The catalysed reaction is 2-C-methyl-D-erythritol 4-phosphate + CTP + H(+) = 4-CDP-2-C-methyl-D-erythritol + diphosphate. It participates in isoprenoid biosynthesis; isopentenyl diphosphate biosynthesis via DXP pathway; isopentenyl diphosphate from 1-deoxy-D-xylulose 5-phosphate: step 2/6. Catalyzes the formation of 4-diphosphocytidyl-2-C-methyl-D-erythritol from CTP and 2-C-methyl-D-erythritol 4-phosphate (MEP). The polypeptide is 2-C-methyl-D-erythritol 4-phosphate cytidylyltransferase (Buchnera aphidicola subsp. Schizaphis graminum (strain Sg)).